A 131-amino-acid chain; its full sequence is Small ribosomal subunit protein uS11 (131 aa).

This sequence belongs to the universal ribosomal protein uS11 family. Part of the 30S ribosomal subunit. Interacts with proteins S7 and S18. Binds to IF-3. Interacts with VmlR. Interacts with BrxC.

In terms of biological role, located on the platform of the 30S subunit, it bridges several disparate RNA helices of the 16S rRNA. Forms part of the Shine-Dalgarno cleft in the 70S ribosome. The sequence is that of Small ribosomal subunit protein uS11 from Bacillus subtilis (strain 168).